A 306-amino-acid polypeptide reads, in one-letter code: Probable L,D-transpeptidase YbiS (306 aa).

A signal peptide spans 1-24; that stretch reads MNMKLKTLFAAAFAVVGFCSTASA. One can recognise a L,D-TPase catalytic domain in the interval 99–234; the sequence is EGIVINSAEM…VPVGTRVQFI (136 aa). The active-site Proton donor/acceptor is histidine 194. Cysteine 210 serves as the catalytic Nucleophile.

It belongs to the YkuD family.

The protein localises to the periplasm. Its pathway is cell wall biogenesis; peptidoglycan biosynthesis. In terms of biological role, responsible, at least in part, for anchoring of the major outer membrane lipoprotein (Lpp) to the peptidoglycan via a meso-diaminopimelyl-L-Lys- bond on the terminal residue of Lpp. The chain is Probable L,D-transpeptidase YbiS (ybiS) from Escherichia coli O6:H1 (strain CFT073 / ATCC 700928 / UPEC).